Here is a 534-residue protein sequence, read N- to C-terminus: Multicopper oxidase LPR1 homolog 3 (534 aa).

Residues His-84 and His-86 each contribute to the Cu cation site. The N-linked (GlcNAc...) asparagine glycan is linked to Asn-109. Cu cation contacts are provided by His-133 and His-135. A Plastocyanin-like domain is found at 219–291; sequence PFQAVQRRRY…VDFSLVVNPN (73 aa). Residues Asn-234, Asn-291, Asn-312, Asn-323, Asn-341, and Asn-372 are each glycosylated (N-linked (GlcNAc...) asparagine). The Cu cation site is built by His-419, His-422, and His-424. A glycan (N-linked (GlcNAc...) asparagine) is linked at Asn-450. Cu cation-binding residues include His-515, Cys-516, His-517, His-521, and Met-526.

The protein belongs to the multicopper oxidase family. Requires Cu cation as cofactor. Expressed in roots and basal stems.

It localises to the endoplasmic reticulum membrane. Functionally, multicopper oxidase that may play a role in the maintenance of inorganic phosphate homeostasis. This is Multicopper oxidase LPR1 homolog 3 from Oryza sativa subsp. japonica (Rice).